The chain runs to 301 residues: Ribonuclease Z (301 aa).

7 residues coordinate Zn(2+): His60, His62, Asp64, His65, His137, Asp207, and His265. Asp64 (proton acceptor) is an active-site residue.

Belongs to the RNase Z family. As to quaternary structure, homodimer. The cofactor is Zn(2+).

It catalyses the reaction Endonucleolytic cleavage of RNA, removing extra 3' nucleotides from tRNA precursor, generating 3' termini of tRNAs. A 3'-hydroxy group is left at the tRNA terminus and a 5'-phosphoryl group is left at the trailer molecule.. In terms of biological role, zinc phosphodiesterase, which displays some tRNA 3'-processing endonuclease activity. Probably involved in tRNA maturation, by removing a 3'-trailer from precursor tRNA. The sequence is that of Ribonuclease Z from Exiguobacterium sibiricum (strain DSM 17290 / CCUG 55495 / CIP 109462 / JCM 13490 / 255-15).